Here is a 371-residue protein sequence, read N- to C-terminus: Rab9 effector protein with kelch motifs (371 aa).

6 Kelch repeats span residues 47–93 (RVLL…FLSA), 98–144 (RLWV…TSSA), 149–201 (CLYV…AVGT), 202–251 (KLFI…VFKD), 252–301 (HLYI…VIPW), and 348–371 (LLLIFGGMDTQAEIYRDCIVSLIE).

Functionally, rab9 effector required for endosome to trans-Golgi network (TGN) transport. This is Rab9 effector protein with kelch motifs (RABEPK) from Gallus gallus (Chicken).